Consider the following 296-residue polypeptide: NAD kinase (296 aa).

The active-site Proton acceptor is the aspartate 72. Residues 72–73 (DG), 146–147 (ND), arginine 157, lysine 174, aspartate 176, 187–192 (TAYALS), and glutamine 247 each bind NAD(+).

Belongs to the NAD kinase family. It depends on a divalent metal cation as a cofactor.

Its subcellular location is the cytoplasm. The enzyme catalyses NAD(+) + ATP = ADP + NADP(+) + H(+). Involved in the regulation of the intracellular balance of NAD and NADP, and is a key enzyme in the biosynthesis of NADP. Catalyzes specifically the phosphorylation on 2'-hydroxyl of the adenosine moiety of NAD to yield NADP. The polypeptide is NAD kinase (Pseudomonas syringae pv. tomato (strain ATCC BAA-871 / DC3000)).